The following is a 225-amino-acid chain: Uracil-DNA glycosylase 1 (225 aa).

The active-site Proton acceptor is the Asp-68.

Belongs to the uracil-DNA glycosylase (UDG) superfamily. UNG family.

The protein localises to the cytoplasm. It carries out the reaction Hydrolyzes single-stranded DNA or mismatched double-stranded DNA and polynucleotides, releasing free uracil.. Functionally, excises uracil residues from the DNA which can arise as a result of misincorporation of dUMP residues by DNA polymerase or due to deamination of cytosine. The protein is Uracil-DNA glycosylase 1 (ung1) of Streptomyces coelicolor (strain ATCC BAA-471 / A3(2) / M145).